Here is a 116-residue protein sequence, read N- to C-terminus: Ribonuclease P protein component (116 aa).

It belongs to the RnpA family. In terms of assembly, consists of a catalytic RNA component (M1 or rnpB) and a protein subunit.

The enzyme catalyses Endonucleolytic cleavage of RNA, removing 5'-extranucleotides from tRNA precursor.. RNaseP catalyzes the removal of the 5'-leader sequence from pre-tRNA to produce the mature 5'-terminus. It can also cleave other RNA substrates such as 4.5S RNA. The protein component plays an auxiliary but essential role in vivo by binding to the 5'-leader sequence and broadening the substrate specificity of the ribozyme. In Leuconostoc mesenteroides subsp. mesenteroides (strain ATCC 8293 / DSM 20343 / BCRC 11652 / CCM 1803 / JCM 6124 / NCDO 523 / NBRC 100496 / NCIMB 8023 / NCTC 12954 / NRRL B-1118 / 37Y), this protein is Ribonuclease P protein component.